Here is a 1160-residue protein sequence, read N- to C-terminus: DNA polymerase III subunit alpha (1160 aa).

Belongs to the DNA polymerase type-C family. DnaE subfamily. The DNA polymerase III holoenzyme complex contains at least 10 different subunits organized into 3 functionally essential subassemblies: the Pol III core, the beta sliding clamp processivity factor and the clamp-loading complex. The Pol III core (subunits alpha, epsilon and theta) contains the polymerase and the 3'-5' exonuclease proofreading activities. The polymerase is tethered to the template via the dimeric beta sliding clamp processivity factor. The clamp loader (also called gamma complex) assembles the beta sliding clamp onto the primed template and plays a central role in the organization and communication at the replication fork. The clamp-loading complex contains delta, delta', psi and chi, and 3 copies of either or both of two different DnaX proteins, gamma and tau. The DNA replisome complex has a single clamp loader (3 tau and 1 each of delta, delta', psi and chi subunits) which binds 3 Pol III cores (1 core on the leading strand and 2 on the lagging strand) each with a beta sliding clamp dimer. Additional proteins in the replisome are other copies of gamma, psi and chi, Ssb, DNA helicase and RNA primase. Interacts with the beta sliding-clamp subunit via the peptide Gln-Ala-Asp-Met-Phe (residues 920-924).

It is found in the cytoplasm. It carries out the reaction DNA(n) + a 2'-deoxyribonucleoside 5'-triphosphate = DNA(n+1) + diphosphate. DNA polymerase III is a complex, multichain enzyme responsible for most of the replicative synthesis in bacteria. This DNA polymerase also exhibits 3' to 5' exonuclease activity. The alpha chain is the DNA polymerase catalytic subunit. It is tethered to replicating DNA by the beta sliding clamp (dnaN), which confers extremely high processivity to the catalytic subunit, copying a 5.4 kb genome in 11 seconds, a speed of at least 500 nucleotides/second at 30 degrees Celsius. The sequence is that of DNA polymerase III subunit alpha (dnaE) from Escherichia coli (strain K12).